The chain runs to 269 residues: Malonyl-[acyl-carrier protein] O-methyltransferase (269 aa).

This sequence belongs to the methyltransferase superfamily.

It carries out the reaction malonyl-[ACP] + S-adenosyl-L-methionine = malonyl-[ACP] methyl ester + S-adenosyl-L-homocysteine. It functions in the pathway cofactor biosynthesis; biotin biosynthesis. In terms of biological role, converts the free carboxyl group of a malonyl-thioester to its methyl ester by transfer of a methyl group from S-adenosyl-L-methionine (SAM). It allows to synthesize pimeloyl-ACP via the fatty acid synthetic pathway. The protein is Malonyl-[acyl-carrier protein] O-methyltransferase of Bacillus anthracis.